Here is a 792-residue protein sequence, read N- to C-terminus: MQQESERCRVRARRPDMALYVPKARRGAVLLKTGDEEESCGSPNSVVKEKQKESSLSQKEVFKDKPEARRLNINPDRKEHNCREEKKSSTKLRMDTCLQKTNRVCSKRGTTESKEVLSQGQQQGAPNAGVITNAPLQRHFKPKKVECLEVETTDVTGHERILLSQACLEISEAQVPSKPFQNVEFCDFSRHEPDGEAFEDKDLEGRIETDTKVLEILYEFPRVFSSVMKPENMIVPIKLSSDSEIVQQSMQTSDGILNPSSGGITTTSVPGSPDGVFDQTCVDFEVESVGGIANSTGFILDQKDTDSIPATMGHISLSESTNDTVSPVMIRECEKNDSTADELHVKHEPPDTAVLAHETHRDSGFKNVGDITNKACMMDTTGMSCSDHVTVDSPYVVAVRIADETSINTRSFSKFVGMSADATPLHVARSGNDTEDFSNPSACSDIYGESISSHFTESTGKLIESLSDCASSLPIKKIAGSNYNTFLDSELSMLNGTKVLSDSAVGIDLGSTGDTTEALHELRTAEEFKTEEQDDSGSIEFGVSFPDRESSSMETSIEPKATETSHTEGITAIEESWESMFNDDGDCLDPRLLQEGILMHIKPENHCSKLSGNTKSRESIQEPRSDYYNHEVPDIDLSDCEFPHVIEIYDFPQEFHTEDLLRVFCSYQKKGFDIKWVDDTHALGVFSSPITARDALGIKHTMVKIRPLSQATRAAKAKARAYAEFLQPAKERPETSAALARRLVISALGVRSKQSKTEREAELKKLQEARERKRLEAKQREDIWEGRDQSTV.

Positions 7 to 27 (RCRVRARRPDMALYVPKARRG) are EJC-binding motif; may mediate interaction with the EJC. Disordered regions lie at residues 32 to 61 (KTGD…QKEV) and 527 to 567 (EFKT…TSHT). A Phosphoserine modification is found at Ser688. A Phosphothreonine modification is found at Thr712. Residues 751 to 783 (RSKQSKTEREAELKKLQEARERKRLEAKQREDI) are a coiled coil. Residues 772–792 (RKRLEAKQREDIWEGRDQSTV) are disordered.

In terms of assembly, may interact with the exon junction complex (EJC) composed at least of CASC3, EIF4A3, MAGOH and RBM8A. As to expression, expressed in placenta.

The sequence is that of Coiled-coil domain-containing protein R3HCC1L (R3HCC1L) from Homo sapiens (Human).